The chain runs to 116 residues: Putative antiporter subunit mnhC2 (116 aa).

A run of 3 helical transmembrane segments spans residues 3–23, 28–48, and 72–92; these read LILL…ILSV, IVIG…SMGN, and AIVL…LVLV.

This sequence belongs to the CPA3 antiporters (TC 2.A.63) subunit C family. As to quaternary structure, may form a heterooligomeric complex that consists of seven subunits: mnhA2, mnhB2, mnhC2, mnhD2, mnhE2, mnhF2 and mnhG2.

It is found in the cell membrane. The protein is Putative antiporter subunit mnhC2 (mnhC2) of Staphylococcus saprophyticus subsp. saprophyticus (strain ATCC 15305 / DSM 20229 / NCIMB 8711 / NCTC 7292 / S-41).